The chain runs to 428 residues: Divergent protein kinase domain 1A (428 aa).

At 1–27 (MARSLCPGAWLRKPYYLQARFSYVRMK) the chain is on the cytoplasmic side. The helical transmembrane segment at 28-48 (YLFFSWLVVFVGSWIIYVQYS) threads the bilayer. The Lumenal segment spans residues 49 to 428 (TYTELCRGKD…WKKISYTNDS (380 aa)).

It belongs to the DIPK family. Among the many cysteines in the lumenal domain, most are probably involved in disulfide bonds.

The protein localises to the endoplasmic reticulum membrane. The protein is Divergent protein kinase domain 1A of Homo sapiens (Human).